Here is a 310-residue protein sequence, read N- to C-terminus: Junctional adhesion molecule C (310 aa).

The N-terminal stretch at 1–29 (MALSRRLRLRLYARLPDFFLLLLFRGCMI) is a signal peptide. Residues 30-241 (EAVNLKSSNR…GQDMEVYDLN (212 aa)) are Extracellular-facing. Positions 35–127 (KSSNRNPVVH…VALNDRKEVD (93 aa)) constitute an Ig-like V-type domain. Cystine bridges form between C53–C115 and C160–C219. Residues N104 and N192 are each glycosylated (N-linked (GlcNAc...) asparagine). The 98-residue stretch at 139–236 (PVTPVCRIPA…AARCEGQDME (98 aa)) folds into the Ig-like C2-type domain. The helical transmembrane segment at 242–262 (IAGIIGGVLVVLIVLAVITMG) threads the bilayer. Residues 263–310 (ICCAYRRGCFISSKQDGESYKSPGKHDGVNYIRTSEEGDFRHKSSFVI) are Cytoplasmic-facing. S-palmitoyl cysteine attachment occurs at residues C264 and C265.

It belongs to the immunoglobulin superfamily. Interacts with ITGAM. Interacts with GORASP2. Proteolytically cleaved from endothelial cells surface into a soluble form by ADAM10 and ADAM17; the release of soluble JAM3 is increased by pro-inflammatory factors. Post-translationally, N-glycosylated. In terms of processing, S-palmitoylated by ZDHHC7. S-palmitoylation promotes expression at tight junctions. As to expression, colocalizes with Jam2 near the lumen of seminiferous tubulues. Detected at junctional plaques that correspond to cell-cell contacts between spermatids and Sertoli cells. Detected on endothelial cells, in brain vessels and kidney glomeruli (at protein level). Detected in heart, lung, liver, kidney, testis, thymus, lymph node and Peyer patch. Endothelial cells.

The protein localises to the cell membrane. It is found in the cell junction. Its subcellular location is the desmosome. It localises to the tight junction. The protein resides in the secreted. In terms of biological role, junctional adhesion protein that mediates heterotypic cell-cell interactions with its cognate receptor JAM2 to regulate different cellular processes. Plays a role in homing and mobilization of hematopoietic stem and progenitor cells within the bone marrow. At the surface of bone marrow stromal cells, it contributes to the retention of the hematopoietic stem and progenitor cells expressing JAM3. Plays a central role in leukocytes extravasation by facilitating transmigration through the endothelium. Plays a role in spermatogenesis where JAM2 and JAM3, which are respectively expressed by Sertoli and germ cells, mediate an interaction between both cell types and play an essential role in the anchorage of germ cells onto Sertoli cells and the assembly of cell polarity complexes during spermatid differentiation. Also functions as a counter-receptor for ITGAM, mediating leukocyte-platelet interactions and is involved in the regulation of transepithelial migration of polymorphonuclear neutrophils (PMN). Plays a role in angiogenesis. Plays a role in the regulation of cell migration. During myogenesis, it is involved in myocyte fusion. Its function is as follows. Promotes chemotaxis of vascular endothelial cells and stimulates angiogenesis. This is Junctional adhesion molecule C (Jam3) from Mus musculus (Mouse).